We begin with the raw amino-acid sequence, 126 residues long: Large ribosomal subunit protein bL12 (126 aa).

It belongs to the bacterial ribosomal protein bL12 family. Homodimer. Part of the ribosomal stalk of the 50S ribosomal subunit. Forms a multimeric L10(L12)X complex, where L10 forms an elongated spine to which 2 to 4 L12 dimers bind in a sequential fashion. Binds GTP-bound translation factors.

Forms part of the ribosomal stalk which helps the ribosome interact with GTP-bound translation factors. Is thus essential for accurate translation. In Acidobacterium capsulatum (strain ATCC 51196 / DSM 11244 / BCRC 80197 / JCM 7670 / NBRC 15755 / NCIMB 13165 / 161), this protein is Large ribosomal subunit protein bL12.